Consider the following 257-residue polypeptide: MESEMSDPQPLQEERYDMSGARLALTLCVTKAREGSEVDMEALERMFRYLKFESTMKRDPTAQQFLEELDEFQQTIDNWEEPVSCAFVVLMAHGEEGLLKGEDEKMVRLEDLFEVLNNKNCKALRGKPKVYIIQACRGEHRDPGEELRGNEELGGDEELGGDEVAVLKNNPQSIPTYTDTLHIYSTVEGYLSYRHDEKGSGFIQTLTDVFIHKKGSILELTEEITRLMANTEVMQEGKPRKVNPEVQSTLRKKLYLQ.

Residues His93 and Cys136 contribute to the active site. A propeptide spanning residues 156–167 (DEELGGDEVAVL) is cleaved from the precursor.

This sequence belongs to the peptidase C14A family. In terms of assembly, heterodimer of a large and a small subunit, both processed from the precursor; the mature active form is a p17/p10 dimer and the intermediate form a p20/p8 dimer. Maturation by proteolytic processing appears to be a two-step process. The precursor is processed by KLK7 to yield the p20/p8 intermediate form which acts the precursor to yield the p17/p10 mature form. Initially it was reported that cleavage by granzyme B, caspase-8 and -10 generates the two active subunits, however the physiological relevance has not been established. As to expression, embryo, adult liver and less in adult brain and kidney. Expressed in differentiating keratinocytes of embryonic skin (at protein level). Expressed in keratinocytes of adult skin suprabasal layers (at protein level).

Its subcellular location is the cytoplasm. It is found in the nucleus. Its function is as follows. Non-apoptotic caspase which is involved in epidermal differentiation. Seems to play a role in keratinocyte differentiation and is required for cornification. Regulates maturation of the epidermis by proteolytically processing filaggrin. In vitro is equally active on the synthetic caspase substrates WEHD-ACF and IETD-AFC. Involved in processing of prosaposin in the epidermis. May be involved in retinal pigment epithelium cell barrier function. The chain is Caspase-14 (Casp14) from Mus musculus (Mouse).